The sequence spans 128 residues: 3-aminoacrylate deaminase RutC (128 aa).

This sequence belongs to the RutC family. As to quaternary structure, homotrimer.

It carries out the reaction (Z)-3-aminoacrylate + H2O + H(+) = 3-oxopropanoate + NH4(+). Involved in pyrimidine catabolism. Catalyzes the deamination of 3-aminoacrylate to malonic semialdehyde, a reaction that can also occur spontaneously. RutC may facilitate the reaction and modulate the metabolic fitness, rather than catalyzing essential functions. This is 3-aminoacrylate deaminase RutC from Escherichia coli O111:H- (strain 11128 / EHEC).